The primary structure comprises 578 residues: Vitelline membrane-like protein (578 aa).

A signal peptide spans 1–21 (MCGRRLLFLAAFGCLLANAFS). The segment at 72–452 (QGYSAPAAPV…AAPSYSAPAS (381 aa)) is 45 X 8 AA approximate tandem repeats of [PS]-[AS]-Y-S-A-P-A-[AS]. Disordered regions lie at residues 133–442 (ASSS…YSAP) and 487–514 (SGSP…ASKS). One can recognise a VM domain in the interval 549–578 (SLPSPPCPKNYVFSCSSVFTPAPCSQGYGY).

In terms of assembly, interacts with Vm26Aa and Vm26Ab; forms part of a disulfide-linked network within the vitelline membrane of stage 10 egg chambers. In terms of processing, becomes part of a disulfide-linked network including other vitelline membrane proteins, including Vm26Aa and Vm26Ab, during vitelline membrane biogenesis and maturation. Sulfated by pip; probably involved in embryo dorsal-ventral axis determination. Sulfation by pip may occur on covalently bound glycosaminoglycans. Secreted into the perivitelline space and becomes stably incorporated into the vitelline membrane (at protein level). Expressed throughout the follicle cell layer of stage 10 egg chambers.

The protein resides in the secreted. It is found in the extracellular space. It localises to the extracellular matrix. Functionally, major early eggshell protein secreted by folicle cells into the perivitelline space and incorporated into the vitelline membrane. Localized sulfation by pip may be involved in embryo dorsal-ventral axis determination. This chain is Vitelline membrane-like protein, found in Drosophila melanogaster (Fruit fly).